A 115-amino-acid chain; its full sequence is Promotilin (115 aa).

The signal sequence occupies residues Met-1 to Gly-25. The interval Arg-43–Gln-73 is disordered.

Belongs to the motilin family.

Its subcellular location is the secreted. Functionally, plays an important role in the regulation of interdigestive gastrointestinal motility and indirectly causes rhythmic contraction of duodenal and colonic smooth muscle. This Ovis aries (Sheep) protein is Promotilin (MLN).